The chain runs to 541 residues: Cytochrome P450 67 (541 aa).

Cysteine 479 serves as a coordination point for heme.

Belongs to the cytochrome P450 family. The cofactor is heme.

This chain is Cytochrome P450 67 (CYP67), found in Uromyces fabae (Rust fungus).